A 481-amino-acid chain; its full sequence is Aspartyl/glutamyl-tRNA(Asn/Gln) amidotransferase subunit B (481 aa).

The protein belongs to the GatB/GatE family. GatB subfamily. Heterotrimer of A, B and C subunits.

It catalyses the reaction L-glutamyl-tRNA(Gln) + L-glutamine + ATP + H2O = L-glutaminyl-tRNA(Gln) + L-glutamate + ADP + phosphate + H(+). The enzyme catalyses L-aspartyl-tRNA(Asn) + L-glutamine + ATP + H2O = L-asparaginyl-tRNA(Asn) + L-glutamate + ADP + phosphate + 2 H(+). Functionally, allows the formation of correctly charged Asn-tRNA(Asn) or Gln-tRNA(Gln) through the transamidation of misacylated Asp-tRNA(Asn) or Glu-tRNA(Gln) in organisms which lack either or both of asparaginyl-tRNA or glutaminyl-tRNA synthetases. The reaction takes place in the presence of glutamine and ATP through an activated phospho-Asp-tRNA(Asn) or phospho-Glu-tRNA(Gln). The protein is Aspartyl/glutamyl-tRNA(Asn/Gln) amidotransferase subunit B of Ectopseudomonas mendocina (strain ymp) (Pseudomonas mendocina).